The primary structure comprises 695 residues: Sodium-dependent phosphate transport protein 2B (695 aa).

Positions 1–44 (MAPWPELENAHPNPNKFIEGASGPQSSIPDKDKGTSKTNDSGTP) are disordered. The Cytoplasmic segment spans residues 1 to 90 (MAPWPELENA…KWSERDSKGK (90 aa)). The chain crosses the membrane as a helical span at residues 91-111 (ILCIFQGIGKFILLLGFLYLF). The Extracellular portion of the chain corresponds to 112–136 (VCSLDVLSSAFQLVGGKMAGQFFSN). The chain crosses the membrane as a helical span at residues 137 to 157 (NSIMSNPVAGLVIGVLVTVMV). At 158-213 (QSSSTSSSIIVSMVASSLLSVRAAIPIIMGANIGTSITNTIVALMQAGDRNEFRRA) the chain is on the cytoplasmic side. A helical transmembrane segment spans residues 214–234 (FAGATVHDFFNWLSVLVLLPL). At 235–363 (EAATHYLEKL…FVNFSLPDLA (129 aa)) the chain is on the extracellular side. N-linked (GlcNAc...) asparagine glycans are attached at residues asparagine 295, asparagine 313, asparagine 321, asparagine 340, and asparagine 356. Cysteines 303 and 350 form a disulfide. A helical transmembrane segment spans residues 364-384 (VGIILLTVSLLILCGCLIMIV). Over 385–408 (KLLGSVLRGQVATVIKKTLNTDFP) the chain is Cytoplasmic. Residues 409–429 (FPFAWLTGYLAILVGAGMTFI) traverse the membrane as a helical segment. At 430 to 486 (VQSSSVFTSAMTPLIGIGVISIERAYPLTLGSNIGTTTTAILAALASPGNTLRSSLQ) the chain is on the extracellular side. The helical transmembrane segment at 487–507 (IALCHFFFNISGILLWYPIPF) threads the bilayer. The Cytoplasmic segment spans residues 508-526 (TRLPIRLAKGLGNISAKYR). Residues 527–547 (WFAVFYLIFFFLLTPLTVFGL) form a helical membrane-spanning segment. Topologically, residues 548–551 (SLAG) are extracellular. Residues 552–572 (WPVLVGVGVPIILLILLVLCL) traverse the membrane as a helical segment. Residues 573 to 695 (RMLQARCPRI…MKALSNTTVF (123 aa)) are Cytoplasmic-facing.

Belongs to the SLC34A transporter family. In terms of tissue distribution, highly expressed in the lung, in type II alveolar cells. Moderately expressed in kidney followed by small intestine.

It is found in the apical cell membrane. The catalysed reaction is 3 Na(+)(out) + phosphate(out) = 3 Na(+)(in) + phosphate(in). Functionally, involved in actively transporting phosphate into cells via Na(+) cotransport. This is Sodium-dependent phosphate transport protein 2B (Slc34a2) from Rattus norvegicus (Rat).